A 130-amino-acid polypeptide reads, in one-letter code: Large ribosomal subunit protein bL12c (130 aa).

It belongs to the bacterial ribosomal protein bL12 family. In terms of assembly, homodimer. Part of the ribosomal stalk of the 50S ribosomal subunit. Forms a multimeric L10(L12)X complex, where L10 forms an elongated spine to which 2 to 4 L12 dimers bind in a sequential fashion. Binds GTP-bound translation factors.

Its subcellular location is the plastid. The protein resides in the chloroplast. Functionally, forms part of the ribosomal stalk which helps the ribosome interact with GTP-bound translation factors. Is thus essential for accurate translation. In Cyanidium caldarium (Red alga), this protein is Large ribosomal subunit protein bL12c.